Reading from the N-terminus, the 45-residue chain is Large ribosomal subunit protein bL34 (45 aa).

Belongs to the bacterial ribosomal protein bL34 family.

This Frankia casuarinae (strain DSM 45818 / CECT 9043 / HFP020203 / CcI3) protein is Large ribosomal subunit protein bL34.